We begin with the raw amino-acid sequence, 168 residues long: Large ribosomal subunit protein uL10 (168 aa).

This sequence belongs to the universal ribosomal protein uL10 family. Part of the ribosomal stalk of the 50S ribosomal subunit. The N-terminus interacts with L11 and the large rRNA to form the base of the stalk. The C-terminus forms an elongated spine to which L12 dimers bind in a sequential fashion forming a multimeric L10(L12)X complex.

Forms part of the ribosomal stalk, playing a central role in the interaction of the ribosome with GTP-bound translation factors. The sequence is that of Large ribosomal subunit protein uL10 from Photorhabdus laumondii subsp. laumondii (strain DSM 15139 / CIP 105565 / TT01) (Photorhabdus luminescens subsp. laumondii).